A 161-amino-acid polypeptide reads, in one-letter code: MAKEEPQSISRDLQELQKKLSLLIDSFQNNSKVVAFMKSPVGQYLDSHPFLAFTLLVFIVMSAVPVGFFLLIVVLTTLAALLGVIILEGLVISVGGFSLLCILCGLGFVSLAMSGMMIASYVVVSSLISCWFSPRPLTQQNTSCDFLPAMKSAEFEGLYQE.

At 1-43 (MAKEEPQSISRDLQELQKKLSLLIDSFQNNSKVVAFMKSPVGQ) the chain is on the cytoplasmic side. A helical transmembrane segment spans residues 44-61 (YLDSHPFLAFTLLVFIVM). At 62-67 (SAVPVG) the chain is on the lumenal side. Residues 68–87 (FFLLIVVLTTLAALLGVIIL) traverse the membrane as a helical segment. At 88 to 93 (EGLVIS) the chain is on the cytoplasmic side. The chain crosses the membrane as a helical span at residues 94–110 (VGGFSLLCILCGLGFVS). The Lumenal segment spans residues 111 to 116 (LAMSGM). A helical membrane pass occupies residues 117–133 (MIASYVVVSSLISCWFS). Residues 134–161 (PRPLTQQNTSCDFLPAMKSAEFEGLYQE) lie on the Cytoplasmic side of the membrane.

This sequence belongs to the LDAF1 family. As to quaternary structure, interacts with isoform 1 and isoform 3 of BSCL2/seipin to form an oligomeric complex. Expressed at high levels in the heart and skeletal muscle. Expressed at low levels in kidney, small intestine, lung and liver.

It localises to the endoplasmic reticulum membrane. It is found in the lipid droplet. Plays an important role in the formation of lipid droplets (LD) which are storage organelles at the center of lipid and energy homeostasis. In association with BSCL2/seipin, defines the sites of LD formation in the endoplasmic reticulum. The protein is Lipid droplet assembly factor 1 of Homo sapiens (Human).